We begin with the raw amino-acid sequence, 167 residues long: Endoribonuclease YbeY (167 aa).

His-132, His-136, and His-142 together coordinate Zn(2+).

It belongs to the endoribonuclease YbeY family. It depends on Zn(2+) as a cofactor.

It localises to the cytoplasm. Functionally, single strand-specific metallo-endoribonuclease involved in late-stage 70S ribosome quality control and in maturation of the 3' terminus of the 16S rRNA. The polypeptide is Endoribonuclease YbeY (Clostridium tetani (strain Massachusetts / E88)).